Reading from the N-terminus, the 665-residue chain is MTVKEKIEQLRLQLHQHNYNYYVLNAPEISDKEFDDLMRELQDLEQEHPEYKDENSPTMRVGSDINKNFTQVAHKYPMLSLSNTYSENEVTDFYDRVRKALNEDFEICCEMKYDGTSISLTYENGKLIRAVTRGDGEKGDDVTDNVKTIRSIPLVLHGDNYPEVFEIRGEILMPWEVFEALNREKEAREEPLFANPRNAASGTLKLQNSAIVASRKLDAYLYYLLGDNLPTDGHYENLQEAAKWGFKISPLMRKCQTLQEVFDFINYWDVERKNLNVATDGIVLKVNSLKQQRNLGFTAKSPRWAIAYKFQAERALTRLNMVTYQVGRTGAVTPVANLDPVQLSGTVVKRASLHNADIIEGLDLHIGDMVYVEKGGEIIPKITGVDTSVRFMIGEKVKFITHCPECGSKLIRYEGEAAHYCPNETACPPQIKGKIEHFISRKAMNIDGLGPETVDMFYRLGLIHDTADLYQLTTDDIRGLDRMGDKSAENIIKGIMQSKEVPFERVIFALGIRFVGETVAKKIAKSFKDIEELENADLETLINIDEIGEKIARSILNYFANESNRKLVDRLKTAGLQLYRPEEDLSGHTDKLAGQSIVISGVFTHHSRDEYKDLIEKHGGKNVGSISSKTSFILAGDNMGPAKLEKASKLGIKIMNEEEFLKLIS.

Residues 31–35, 80–81, and E110 contribute to the NAD(+) site; these read DKEFD and SL. The active-site N6-AMP-lysine intermediate is the K112. NAD(+) is bound by residues R133, E170, K285, and K309. 4 residues coordinate Zn(2+): C403, C406, C421, and C427. The region spanning 587–665 is the BRCT domain; the sequence is GHTDKLAGQS…NEEEFLKLIS (79 aa).

This sequence belongs to the NAD-dependent DNA ligase family. LigA subfamily. Mg(2+) serves as cofactor. Requires Mn(2+) as cofactor.

It catalyses the reaction NAD(+) + (deoxyribonucleotide)n-3'-hydroxyl + 5'-phospho-(deoxyribonucleotide)m = (deoxyribonucleotide)n+m + AMP + beta-nicotinamide D-nucleotide.. In terms of biological role, DNA ligase that catalyzes the formation of phosphodiester linkages between 5'-phosphoryl and 3'-hydroxyl groups in double-stranded DNA using NAD as a coenzyme and as the energy source for the reaction. It is essential for DNA replication and repair of damaged DNA. This is DNA ligase from Bacteroides fragilis (strain ATCC 25285 / DSM 2151 / CCUG 4856 / JCM 11019 / LMG 10263 / NCTC 9343 / Onslow / VPI 2553 / EN-2).